Here is a 246-residue protein sequence, read N- to C-terminus: tRNA pseudouridine synthase A (246 aa).

Asp52 (nucleophile) is an active-site residue. Substrate is bound at residue Tyr112.

Belongs to the tRNA pseudouridine synthase TruA family. In terms of assembly, homodimer.

It catalyses the reaction uridine(38/39/40) in tRNA = pseudouridine(38/39/40) in tRNA. Functionally, formation of pseudouridine at positions 38, 39 and 40 in the anticodon stem and loop of transfer RNAs. In Pelagibacter ubique (strain HTCC1062), this protein is tRNA pseudouridine synthase A.